We begin with the raw amino-acid sequence, 853 residues long: FIGNL1-interacting regulator of recombination and mitosis (853 aa).

Phosphoserine; by PLK1 is present on residues Ser43 and Ser744. The residue at position 792 (Lys792) is an N6-acetyllysine.

As to quaternary structure, interacts (via its N-terminal region) with PLK1; controls PLK1 kinase activity. Interacts (via the KVVXF motif) with PPP1CC; controls PLK1 kinase activity. Interacts with FIGNL1; may regulate homologous recombination. In terms of processing, phosphorylation at Ser-43 by PLK1 strengthens FIRRM-PLK1 interaction. Phosphorylation at Ser-744 by PLK1 negatively regulates its interaction with PPP1CC.

The protein localises to the chromosome. The protein resides in the centromere. Its subcellular location is the kinetochore. It localises to the nucleus. It is found in the midbody. The protein localises to the cytoplasm. The protein resides in the cytoskeleton. Its subcellular location is the spindle. Functionally, regulates PLK1 kinase activity at kinetochores and promotes faithful chromosome segregation in prometaphase by bridging kinase and phosphatase activities. Phosphorylation of FIRRM by PLK1 negatively regulates its interaction with the phosphatase, PPP1CC, thus creating a negative feedback loop for maintaining proper PLK1 kinase activity during mitosis. In complex with FIGL1 may regulate homologous recombination. The protein is FIGNL1-interacting regulator of recombination and mitosis of Homo sapiens (Human).